Here is a 280-residue protein sequence, read N- to C-terminus: Fructose-1,6-bisphosphatase class 1 (280 aa).

Residues E64, D83, L85, and D86 each coordinate Mg(2+). Substrate contacts are provided by residues D86–S89, Y189, and K220. E226 contacts Mg(2+).

It belongs to the FBPase class 1 family. As to quaternary structure, homotetramer. Mg(2+) serves as cofactor.

It is found in the cytoplasm. It catalyses the reaction beta-D-fructose 1,6-bisphosphate + H2O = beta-D-fructose 6-phosphate + phosphate. It participates in carbohydrate biosynthesis; gluconeogenesis. This chain is Fructose-1,6-bisphosphatase class 1, found in Campylobacter jejuni (strain RM1221).